The chain runs to 265 residues: Type III pantothenate kinase (265 aa).

Position 6–13 (6–13 (DVGNTHTV)) interacts with ATP. A substrate-binding site is contributed by 112-115 (GADR). Asp114 functions as the Proton acceptor in the catalytic mechanism. Asp134 contributes to the K(+) binding site. Thr137 is an ATP binding site. A substrate-binding site is contributed by Thr189.

Belongs to the type III pantothenate kinase family. Homodimer. It depends on NH4(+) as a cofactor. K(+) serves as cofactor.

The protein resides in the cytoplasm. The catalysed reaction is (R)-pantothenate + ATP = (R)-4'-phosphopantothenate + ADP + H(+). It participates in cofactor biosynthesis; coenzyme A biosynthesis; CoA from (R)-pantothenate: step 1/5. Catalyzes the phosphorylation of pantothenate (Pan), the first step in CoA biosynthesis. The polypeptide is Type III pantothenate kinase (Streptomyces coelicolor (strain ATCC BAA-471 / A3(2) / M145)).